The following is a 577-amino-acid chain: Arginine--tRNA ligase (577 aa).

The 'HIGH' region signature appears at 122–132 (PNVAKEMHVGH).

It belongs to the class-I aminoacyl-tRNA synthetase family. As to quaternary structure, monomer.

It is found in the cytoplasm. It catalyses the reaction tRNA(Arg) + L-arginine + ATP = L-arginyl-tRNA(Arg) + AMP + diphosphate. The chain is Arginine--tRNA ligase from Salmonella agona (strain SL483).